A 337-amino-acid chain; its full sequence is Quercetin 2,3-dioxygenase (337 aa).

Cupin type-2 domains are found at residues 55 to 110 (KGDA…MQSH) and 226 to 281 (PKGD…RLDS). Positions 62, 64, 69, 103, 234, 236, 241, and 275 each coordinate Fe cation.

As to quaternary structure, homodimer. Fe(2+) serves as cofactor.

It carries out the reaction quercetin + O2 = 2-(3,4-dihydroxybenzoyloxy)-4,6-dihydroxybenzoate + CO. It participates in flavonoid metabolism; quercetin degradation. Performs the first step in the degradation of the flavonoid quercetin by a dioxygenase reaction. The enzyme catalyzes the cleavage of the O-heteroaromatic ring of the flavonol quercetin yielding the depside 2-protocatechuoyl-phloroglucinol carboxylic acid and carbon monoxide. This involves the remarkable dioxygenolytic cleavage of two carbon-carbon bonds. This Bacillus subtilis (strain 168) protein is Quercetin 2,3-dioxygenase (qdoI).